A 979-amino-acid chain; its full sequence is Protein argonaute PNH1 (979 aa).

The disordered stretch occupies residues 1 to 95; that stretch reads MLEVLDMAPP…GGRAGAGPGP (95 aa). Residues 54 to 67 show a composition bias toward low complexity; sequence AETAAATAAVAPPE. Positions 77 to 86 are enriched in basic residues; the sequence is GRRRGGRGRG. In terms of domain architecture, PAZ spans 333–446; sequence PVIEFVAQIL…LPMEACKIVE (114 aa). A Piwi domain is found at 620–941; it reads LLLAILPDNN…AAFRARFYME (322 aa).

Belongs to the argonaute family. Ago subfamily.

Its subcellular location is the cytoplasm. Functionally, probably involved in the RNA silencing pathway. May bind to short RNAs such as microRNAs (miRNAs) or short interfering RNAs (siRNAs), and represses the translation of mRNAs which are complementary to them. Plays a role in the maintenance of the indeterminate state of the stem cells in the shoot apical meristem (SAM). Regulates leaf formation through vascular development and may be involved in determining the central domain of the leaf founder region. This chain is Protein argonaute PNH1 (PHN1), found in Oryza sativa subsp. japonica (Rice).